We begin with the raw amino-acid sequence, 459 residues long: Argininosuccinate lyase (459 aa).

It belongs to the lyase 1 family. Argininosuccinate lyase subfamily.

It localises to the cytoplasm. It catalyses the reaction 2-(N(omega)-L-arginino)succinate = fumarate + L-arginine. It participates in amino-acid biosynthesis; L-arginine biosynthesis; L-arginine from L-ornithine and carbamoyl phosphate: step 3/3. In Prochlorococcus marinus (strain MIT 9515), this protein is Argininosuccinate lyase.